The following is a 388-amino-acid chain: S-adenosylmethionine synthase (388 aa).

Histidine 17 serves as a coordination point for ATP. Aspartate 19 is a binding site for Mg(2+). Glutamate 45 contributes to the K(+) binding site. Residues glutamate 58 and glutamine 102 each coordinate L-methionine. The interval glutamine 102–alanine 112 is flexible loop. ATP contacts are provided by residues aspartate 167–lysine 169, aspartate 241, arginine 247–lysine 248, alanine 264, and lysine 268. Residue aspartate 241 participates in L-methionine binding. Residue lysine 272 coordinates L-methionine.

It belongs to the AdoMet synthase family. Homotetramer; dimer of dimers. Requires Mg(2+) as cofactor. The cofactor is K(+).

The protein resides in the cytoplasm. The catalysed reaction is L-methionine + ATP + H2O = S-adenosyl-L-methionine + phosphate + diphosphate. It functions in the pathway amino-acid biosynthesis; S-adenosyl-L-methionine biosynthesis; S-adenosyl-L-methionine from L-methionine: step 1/1. In terms of biological role, catalyzes the formation of S-adenosylmethionine (AdoMet) from methionine and ATP. The overall synthetic reaction is composed of two sequential steps, AdoMet formation and the subsequent tripolyphosphate hydrolysis which occurs prior to release of AdoMet from the enzyme. The protein is S-adenosylmethionine synthase of Maricaulis maris (strain MCS10) (Caulobacter maris).